Here is a 325-residue protein sequence, read N- to C-terminus: ATP phosphoribosyltransferase (325 aa).

The protein belongs to the ATP phosphoribosyltransferase family. Long subfamily. The cofactor is Mg(2+).

The protein resides in the cytoplasm. The catalysed reaction is 1-(5-phospho-beta-D-ribosyl)-ATP + diphosphate = 5-phospho-alpha-D-ribose 1-diphosphate + ATP. It participates in amino-acid biosynthesis; L-histidine biosynthesis; L-histidine from 5-phospho-alpha-D-ribose 1-diphosphate: step 1/9. Feedback inhibited by histidine. Catalyzes the condensation of ATP and 5-phosphoribose 1-diphosphate to form N'-(5'-phosphoribosyl)-ATP (PR-ATP). Has a crucial role in the pathway because the rate of histidine biosynthesis seems to be controlled primarily by regulation of HisG enzymatic activity. The polypeptide is ATP phosphoribosyltransferase (Nitrobacter hamburgensis (strain DSM 10229 / NCIMB 13809 / X14)).